The sequence spans 275 residues: 3-methyl-2-oxobutanoate hydroxymethyltransferase (275 aa).

Mg(2+) contacts are provided by Asp-44 and Asp-83. 3-methyl-2-oxobutanoate is bound by residues 44–45 (DS), Asp-83, and Lys-113. Glu-115 serves as a coordination point for Mg(2+). Residue Glu-182 is the Proton acceptor of the active site.

It belongs to the PanB family. Homodecamer; pentamer of dimers. Requires Mg(2+) as cofactor.

It localises to the cytoplasm. It carries out the reaction 3-methyl-2-oxobutanoate + (6R)-5,10-methylene-5,6,7,8-tetrahydrofolate + H2O = 2-dehydropantoate + (6S)-5,6,7,8-tetrahydrofolate. It functions in the pathway cofactor biosynthesis; (R)-pantothenate biosynthesis; (R)-pantoate from 3-methyl-2-oxobutanoate: step 1/2. Catalyzes the reversible reaction in which hydroxymethyl group from 5,10-methylenetetrahydrofolate is transferred onto alpha-ketoisovalerate to form ketopantoate. This Clostridium botulinum (strain 657 / Type Ba4) protein is 3-methyl-2-oxobutanoate hydroxymethyltransferase.